We begin with the raw amino-acid sequence, 375 residues long: tRNA-specific 2-thiouridylase MnmA (375 aa).

Residues 12–19 and Met-38 contribute to the ATP site; that span reads GMSGGVDS. An interaction with target base in tRNA region spans residues 98–100; that stretch reads NPD. Cys-103 (nucleophile) is an active-site residue. Cys-103 and Cys-200 form a disulfide bridge. Gly-127 serves as a coordination point for ATP. An interaction with tRNA region spans residues 150 to 152; that stretch reads KDQ. Cys-200 acts as the Cysteine persulfide intermediate in catalysis. An interaction with tRNA region spans residues 312-313; the sequence is RY.

Belongs to the MnmA/TRMU family.

It is found in the cytoplasm. It catalyses the reaction S-sulfanyl-L-cysteinyl-[protein] + uridine(34) in tRNA + AH2 + ATP = 2-thiouridine(34) in tRNA + L-cysteinyl-[protein] + A + AMP + diphosphate + H(+). Its function is as follows. Catalyzes the 2-thiolation of uridine at the wobble position (U34) of tRNA, leading to the formation of s(2)U34. The sequence is that of tRNA-specific 2-thiouridylase MnmA from Lactobacillus johnsonii (strain CNCM I-12250 / La1 / NCC 533).